The sequence spans 204 residues: E3 ubiquitin-protein ligase MPSR1 (204 aa).

The RING-type; atypical zinc finger occupies 113–154 (CVICLEEWKSEETVKEMPCKHRFHGGCIEKWLGFHGSCPVCR).

In terms of processing, autoubiquitinated.

It is found in the cytoplasm. It catalyses the reaction S-ubiquitinyl-[E2 ubiquitin-conjugating enzyme]-L-cysteine + [acceptor protein]-L-lysine = [E2 ubiquitin-conjugating enzyme]-L-cysteine + N(6)-ubiquitinyl-[acceptor protein]-L-lysine.. Its function is as follows. E3 ubiquitin-protein ligase involved in protein quality control (PQC) under proteotoxic stress. Is essential to plant survival under proteotoxic stress. Functions by removing damaged proteins before they form cytotoxic aggregates. Recognizes misfolded proteins selectively and tethers polyubiquitin chains to the proteins directly for subsequent degradation by the 26S proteasome pathway. Targets misfolded proteins independently of cytoplasmic chaperones. Associates with the 26S proteasome and sustains the structural integrity of the proteasome complex at the initial stage of proteotoxic stress. Under normal conditions, MPSR1 becomes highly unstable by its autoubiquitination activity and is stabilized during proteotoxic stress by conjugating ubiquitins on misfolded proteins. This chain is E3 ubiquitin-protein ligase MPSR1, found in Arabidopsis thaliana (Mouse-ear cress).